Here is a 616-residue protein sequence, read N- to C-terminus: MALLQIAEPGQSAAPHQHKLAVGIDLGTTNSLVAAVRSGSSEVLRDEQDRLLIPSIVHLTEDQVIVGYEAGKLASQDPQNTIISVKRLIGRSCTDVQQRYPNLPYQFSATENGLPLLKTRRGLLSPVEISAEILKKLTALAEQRLGGELTGAVITVPAYFDDAQRQSTKDAAKLAGLKVLRLLNEPTAAAIAYGLDSGQEGVIAVYDLGGGTFDVSILRLSKGVFEVLATGGDTALGGDDFDHLLAEWIVKKSTVAPQNDREKRQLIEVANQVKVALTTNDKIRISYAEQNLEITRDEFNSLISGLVKRSLLACRRTLKDANLTPSDILEVVMVGGSTRIPYVREQVGEFFQCTPLTSIDPDKVVALGAAIQADILVGNKPDSEMLLLDVIPLSLGIETMGGLVEKIIPRNTTIPVARAQEFTTFKDGQTAMSVHVLQGEREMVTDCRSLARFTLRGIPAMVAGAARIRVTYQVDADGLLSVTAVEKSTGVQASTQVKPSYGLTDDEIANMLKSSMEHAKEDIQTRLLTEQRVDATRVIESVYSALQQDEDLLDDNELSAVKNALVSLQKLIQEEDSLAIKQGIKMLDQATQEFASRRMDKSIRRALSGQHIEHIK.

Belongs to the heat shock protein 70 family.

Functionally, chaperone involved in the maturation of iron-sulfur cluster-containing proteins. Has a low intrinsic ATPase activity which is markedly stimulated by HscB. This is Chaperone protein HscA homolog from Histophilus somni (strain 129Pt) (Haemophilus somnus).